We begin with the raw amino-acid sequence, 173 residues long: ATP synthase subunit d, mitochondrial (173 aa).

The N-terminal 23 residues, 1–23, are a transit peptide targeting the mitochondrion; that stretch reads MAARSAALKIDWVKVTSSLGLRG.

This sequence belongs to the ATPase d subunit family. F-type ATPases have 2 components, CF(1) - the catalytic core - and CF(0) - the membrane proton channel. In yeast, the dimeric form of ATP synthase consists of 17 polypeptides: alpha, beta, gamma, delta, epsilon, 4 (B), 5 (OSCP), 6 (A), 8, 9 (C), d, E (Tim11), f, g, h, i/j and k.

The protein localises to the mitochondrion inner membrane. Functionally, mitochondrial membrane ATP synthase (F(1)F(0) ATP synthase or Complex V) produces ATP from ADP in the presence of a proton gradient across the membrane which is generated by electron transport complexes of the respiratory chain. F-type ATPases consist of two structural domains, F(1) - containing the extramembraneous catalytic core, and F(0) - containing the membrane proton channel, linked together by a central stalk and a peripheral stalk. During catalysis, ATP synthesis in the catalytic domain of F(1) is coupled via a rotary mechanism of the central stalk subunits to proton translocation. Part of the complex F(0) domain and the peripheric stalk, which acts as a stator to hold the catalytic alpha(3)beta(3) subcomplex and subunit a/ATP6 static relative to the rotary elements. The chain is ATP synthase subunit d, mitochondrial (atp7) from Aspergillus terreus (strain NIH 2624 / FGSC A1156).